The chain runs to 319 residues: Cytochrome c biogenesis protein CcsA (319 aa).

Transmembrane regions (helical) follow at residues 9–29 (ILTH…LITL), 44–64 (GVIG…AYSG), 71–91 (LYES…FPYF), 143–163 (MVLG…LLVI), 225–245 (IISL…VWAN), 259–273 (TWAF…IYLH), and 286–306 (AIVA…VNLL).

This sequence belongs to the CcmF/CycK/Ccl1/NrfE/CcsA family. In terms of assembly, may interact with Ccs1.

It localises to the plastid. The protein localises to the chloroplast thylakoid membrane. Required during biogenesis of c-type cytochromes (cytochrome c6 and cytochrome f) at the step of heme attachment. This Oenothera biennis (German evening primrose) protein is Cytochrome c biogenesis protein CcsA.